Here is a 102-residue protein sequence, read N- to C-terminus: Large ribosomal subunit protein bL21 (102 aa).

It belongs to the bacterial ribosomal protein bL21 family. As to quaternary structure, part of the 50S ribosomal subunit. Contacts protein L20.

This protein binds to 23S rRNA in the presence of protein L20. The sequence is that of Large ribosomal subunit protein bL21 from Leifsonia xyli subsp. xyli (strain CTCB07).